We begin with the raw amino-acid sequence, 425 residues long: Serine--tRNA ligase (425 aa).

231-233 provides a ligand contact to L-serine; that stretch reads TAE. ATP is bound by residues 262 to 264 and valine 278; that span reads RTE. Glutamate 285 contributes to the L-serine binding site. 349–352 is a binding site for ATP; it reads EVTS. Residue threonine 384 participates in L-serine binding.

This sequence belongs to the class-II aminoacyl-tRNA synthetase family. Type-1 seryl-tRNA synthetase subfamily. In terms of assembly, homodimer. The tRNA molecule binds across the dimer.

It is found in the cytoplasm. The catalysed reaction is tRNA(Ser) + L-serine + ATP = L-seryl-tRNA(Ser) + AMP + diphosphate + H(+). It carries out the reaction tRNA(Sec) + L-serine + ATP = L-seryl-tRNA(Sec) + AMP + diphosphate + H(+). The protein operates within aminoacyl-tRNA biosynthesis; selenocysteinyl-tRNA(Sec) biosynthesis; L-seryl-tRNA(Sec) from L-serine and tRNA(Sec): step 1/1. Catalyzes the attachment of serine to tRNA(Ser). Is also able to aminoacylate tRNA(Sec) with serine, to form the misacylated tRNA L-seryl-tRNA(Sec), which will be further converted into selenocysteinyl-tRNA(Sec). The polypeptide is Serine--tRNA ligase (Dictyoglomus turgidum (strain DSM 6724 / Z-1310)).